Consider the following 182-residue polypeptide: MSNTDDGFDKEAAREELREKYNADQQDREETARMSDLLLQGATMTNDHCDRCGTPLFRHDGETFCPTCQHDDNDDEPTATTQSAPDRSPPADPQATPHSSPPTTPDTSSSTAAATDDVPTAAARDRPEHAPTAEPTTPATEELESTIAALARRASDADDPRTAREYLEAAHEAAAALDTLRP.

The segment at 1 to 162 (MSNTDDGFDK…RASDADDPRT (162 aa)) is disordered. Composition is skewed to basic and acidic residues over residues 7–33 (GFDK…ETAR) and 47–62 (DHCD…HDGE). The span at 105–122 (PDTSSSTAAATDDVPTAA) shows a compositional bias: low complexity. The segment covering 153–162 (RASDADDPRT) has biased composition (basic and acidic residues).

Belongs to the UPF0148 family.

This Halobacterium salinarum (strain ATCC 700922 / JCM 11081 / NRC-1) (Halobacterium halobium) protein is UPF0148 protein VNG_2366C.